Reading from the N-terminus, the 299-residue chain is Glutamate formimidoyltransferase (299 aa).

The active-site For formimidoyltransferase activity is histidine 82. Position 163-172 (163-172 (GDRKIHPTAG)) interacts with folate.

Belongs to the formiminotransferase family.

The protein resides in the cytoplasm. The catalysed reaction is (6S)-5-formyl-5,6,7,8-tetrahydrofolate + L-glutamate = N-formyl-L-glutamate + (6S)-5,6,7,8-tetrahydrofolate + H(+). It catalyses the reaction 5-formimidoyltetrahydrofolate + L-glutamate = N-formimidoyl-L-glutamate + (6S)-5,6,7,8-tetrahydrofolate. The enzyme catalyses (6S)-5-formyl-5,6,7,8-tetrahydrofolate + ATP = (6R)-5,10-methenyltetrahydrofolate + ADP + phosphate. It participates in amino-acid degradation; L-histidine degradation into L-glutamate; L-glutamate from N-formimidoyl-L-glutamate (transferase route): step 1/1. Its pathway is one-carbon metabolism; tetrahydrofolate interconversion. Catalyzes the transfer of the formyl group from N-formylglutamate to tetrahydrofolate (THF) to yield 5-formyltetrahydrofolate (5-CHO-THF) and glutamate (Glu). The triglutamate form of 5-CHO-THF (5-CHO-THF-Glu3) can also be used as substrate. It can also catalyze the transfer of the formimino group from N-formiminoglutamate to tetrahydrofolate (THF) to yield 5-formiminotetrahydrofolate (5-NH=CH-THF) and glutamate (Glu). It can replace YgfA to catalyze the irreversible ATP-dependent transformation of 5-CHO-THF to form 5,10-methenyltetrahydrofolate (5,10-CH=THF). The sequence is that of Glutamate formimidoyltransferase from Streptococcus pyogenes serotype M1.